Consider the following 108-residue polypeptide: Translation initiation factor 1A (108 aa).

The region spanning 11–85 is the S1-like domain; sequence PSRDVPRPEE…NRCDILYKYG (75 aa).

This sequence belongs to the eIF-1A family.

Its function is as follows. Seems to be required for maximal rate of protein biosynthesis. Enhances ribosome dissociation into subunits and stabilizes the binding of the initiator Met-tRNA(I) to 40 S ribosomal subunits. This chain is Translation initiation factor 1A (eIF1A), found in Saccharolobus solfataricus (strain ATCC 35092 / DSM 1617 / JCM 11322 / P2) (Sulfolobus solfataricus).